Consider the following 1058-residue polypeptide: Leucine--tRNA ligase, cytoplasmic (1058 aa).

The 'HIGH' region motif lies at P48–H58. The 'KMSKS' region signature appears at K711–S715. An ATP-binding site is contributed by K714.

It belongs to the class-I aminoacyl-tRNA synthetase family.

The protein localises to the cytoplasm. It carries out the reaction tRNA(Leu) + L-leucine + ATP = L-leucyl-tRNA(Leu) + AMP + diphosphate. The sequence is that of Leucine--tRNA ligase, cytoplasmic (leuS) from Dictyostelium discoideum (Social amoeba).